The chain runs to 252 residues: Flap endonuclease Xni (252 aa).

Asp105 lines the Mg(2+) pocket. The 5'-3' exonuclease domain maps to Glu162–Leu250. Leu172, Ala173, Pro181, Val183, and Ile186 together coordinate K(+). Residues Gly185–Ser190 are interaction with DNA.

The protein belongs to the Xni family. Requires Mg(2+) as cofactor. K(+) serves as cofactor.

In terms of biological role, has flap endonuclease activity. During DNA replication, flap endonucleases cleave the 5'-overhanging flap structure that is generated by displacement synthesis when DNA polymerase encounters the 5'-end of a downstream Okazaki fragment. The sequence is that of Flap endonuclease Xni from Shewanella woodyi (strain ATCC 51908 / MS32).